A 173-amino-acid polypeptide reads, in one-letter code: Streptothricin acetyltransferase A (173 aa).

The region spanning 21–173 (VVFGRMIPAF…EIAIFWYYKF (153 aa)) is the N-acetyltransferase domain.

The protein belongs to the acetyltransferase family. GNAT subfamily. Homodimer.

The enzyme catalyses streptothricin D + acetyl-CoA = N(beta)-acetylstreptothricin D + CoA + H(+). The catalysed reaction is streptothricin F + acetyl-CoA = N(beta)-acetylstreptothricin F + CoA + H(+). Its function is as follows. Involved in resistance to streptothricin, a broad-spectrum antibiotic produced by streptomycetes. Detoxifies streptothricin via acetylation of the beta amino group of the first beta-lysyl moiety of streptothricin. This is Streptothricin acetyltransferase A from Bacillus subtilis (strain 168).